Here is a 241-residue protein sequence, read N- to C-terminus: Sugar fermentation stimulation protein homolog (241 aa).

It belongs to the SfsA family.

The protein is Sugar fermentation stimulation protein homolog of Nostoc punctiforme (strain ATCC 29133 / PCC 73102).